The chain runs to 234 residues: STARD3 N-terminal-like protein (234 aa).

The residue at position 1 (Met1) is an N-acetylmethionine. The Cytoplasmic portion of the chain corresponds to 1–53 (MNHLPEDMENALTGSQSSHASLRNIHSINPTQLMARIESYEGREKKGISDVRR). Ser15, Ser21, and Ser27 each carry phosphoserine. Residues 48-218 (ISDVRRTFCL…YSPPESEAGS (171 aa)) form the MENTAL domain. Residues 54-74 (TFCLFVTFDLLFVTLLWIIEL) traverse the membrane as a helical segment. The Extracellular portion of the chain corresponds to 75-97 (NVNGGIENTLEKEVMQYDYYSSY). Residues 98 to 118 (FDIFLLAVFRFKVLILAYAVC) form a helical membrane-spanning segment. At 119–122 (RLRH) the chain is on the cytoplasmic side. Residues 123 to 143 (WWAIALTTAVTSAFLLAKVIL) traverse the membrane as a helical segment. The Extracellular portion of the chain corresponds to 144–150 (SKLFSQG). A helical membrane pass occupies residues 151–171 (AFGYVLPIISFILAWIETWFL). The Cytoplasmic segment spans residues 172 to 234 (DFKVLPQEAE…QDSEKPLLEL (63 aa)). The residue at position 193 (Ser193) is a Phosphoserine. A disordered region spans residues 200–234 (PGGLSDGQFYSPPESEAGSEEAEEKQDSEKPLLEL). An FFAT motif is present at residues 208 to 213 (FYSPPE). Basic and acidic residues predominate over residues 224–234 (KQDSEKPLLEL).

It belongs to the STARD3 family. In terms of assembly, homodimer. Interacts (via the MENTAL domain) with STARD3NL. Interacts (via FFAT motif) with VAPA. Interacts (via FFAT motif) with VAPB. Interacts (via FFAT motif) with MOSPD2 (via MSP domain).

It localises to the late endosome membrane. Tethering protein that creates contact site between the endoplasmic reticulum and late endosomes: localizes to late endosome membranes and contacts the endoplasmic reticulum via interaction with VAPA and VAPB. This Homo sapiens (Human) protein is STARD3 N-terminal-like protein.